Consider the following 402-residue polypeptide: Propionate kinase (402 aa).

ATP is bound by residues N11 and K18. Position 11 (N11) interacts with Mg(2+). R86 provides a ligand contact to substrate. Catalysis depends on D143, which acts as the Proton donor/acceptor. ATP contacts are provided by residues H175, H203–G207, D278–R280, and G326–N330.

This sequence belongs to the acetokinase family. TdcD subfamily. Homodimer. The cofactor is Mg(2+).

The catalysed reaction is propanoate + ATP = propanoyl phosphate + ADP. It participates in amino-acid degradation; L-threonine degradation via propanoate pathway; propanoate from L-threonine: step 4/4. Its function is as follows. Catalyzes the conversion of propionyl phosphate and ADP to propionate and ATP. The polypeptide is Propionate kinase (Salmonella typhimurium (strain D23580)).